A 338-amino-acid polypeptide reads, in one-letter code: METKVKAHVAPWKIEEVKTLKGLIKSKPVVAIVDMMDVPAPQLQEIRDKIRDKVKLRMSRNTLIIRALKEAAEELNNPKLAELANYVERGAAILVTDMNPFKLYKLLEENKSPAPVRGGQIAPCDIKVEKGSTGMPPGPFLGELKSVGIPAAIEKGKIAIKEDKVVVKKGEVVSPKLAAVLDRLGIKPIKVGLNILAVYEDGIIYTPDVLKVDEEKLLADIQAAYQNAFNLAFNTAYPAKEVLPFLIQKAFINARALSVETAFVTKETAGDILAKAQAQALALASKLPDEALDEDIKAKLSSVEVSAAPAAEEEKEEEKKEEEKKEEDTGAAGLALLF.

The disordered stretch occupies residues 303 to 338 (VEVSAAPAAEEEKEEEKKEEEKKEEDTGAAGLALLF). Basic and acidic residues predominate over residues 317 to 328 (EEKKEEEKKEED).

Belongs to the universal ribosomal protein uL10 family. Part of the 50S ribosomal subunit. Forms part of the ribosomal stalk which helps the ribosome interact with GTP-bound translation factors. Forms a heptameric L10(L12)2(L12)2(L12)2 complex, where L10 forms an elongated spine to which the L12 dimers bind in a sequential fashion.

Forms part of the ribosomal stalk, playing a central role in the interaction of the ribosome with GTP-bound translation factors. In Methanocaldococcus jannaschii (strain ATCC 43067 / DSM 2661 / JAL-1 / JCM 10045 / NBRC 100440) (Methanococcus jannaschii), this protein is Large ribosomal subunit protein uL10.